Here is a 62-residue protein sequence, read N- to C-terminus: Mastoparan-AF (62 aa).

The first 25 residues, 1-25 (MKNTILILFTAFIALLGFFGMSAEA), serve as a signal peptide directing secretion. AXPX repeat units follow at residues 25 to 28 (ADPI), 29 to 32 (ADPI), 33 to 36 (ADPI), and 43 to 46 (ADPE). A propeptide spanning residues 26–47 (DPIADPIADPISGPNAEADPEA) is cleaved from the precursor. Phenylalanine 61 carries the post-translational modification Phenylalanine amide.

Belongs to the MCD family. Mastoparan subfamily. In terms of tissue distribution, expressed by the venom gland.

The protein localises to the secreted. It localises to the target cell membrane. Functionally, antimicrobial and mast cell degranulating peptide. Has broad spectrum antibacterial activity against both Gram-positive and Gram-negative bacteria (S.aureus MIC=16-32 ug/ml, S.xylosus MIC=1.5 ug/ml, S.alactolyticus MIC=8 ug/ml, C.koseri MIC=4 ug/ml, E.coli MIC=4-32 ug/ml, K.pneumoniae MIC=32 ug/ml, P.aerugiosa MIC=96 ug/ml, S.choleraesuis MIC=16 ug/ml, S.typhimurium MIC=32 ug/ml, V.parahamelytics MIC=16 ug/ml). Is also active on multi-antibiotic resistant hemolytic E.coli O157:H7. Acts by affecting membrane permeability. On E.coli O157:H7, acts through multiple membrane disruption patterns, including large perforations (full opening) at apical ends (hollow tubes), vesicle budding, forming dents, and membrane corrugation and invagination leading to irregular pits or pores. Exerts 40% lower membrane permeabilization activities on E.coli O157:H7 than on the non-pathogen E.coli BL21. Shows little hemolytic activities on sheep, chicken and human erythrocytes, but with a higher activity on chicken erythrocytes. Its mast cell degranulation activity may be related to the activation of G-protein coupled receptors in mast cells as well as interaction with other proteins located in cell endosomal membranes in the mast cells. The protein is Mastoparan-AF of Vespa affinis (Lesser banded hornet).